Here is a 5065-residue protein sequence, read N- to C-terminus: Dynein heavy chain-like protein 1 (5065 aa).

A stem region spans residues 1–1957; it reads MELEKTHLIN…IIKMADATFE (1957 aa). The stretch at 1677 to 1705 forms a coiled coil; the sequence is QMEGFQKQLDRLSDSLSKIQKALGEYLEK. Residues 1958–2179 form an AAA 1 region; that stretch reads YGYEYLGMCE…LRSLKSVLNS (222 aa). An ATP-binding site is contributed by 1996–2003; the sequence is GPAGTGKT. The interval 2203–2223 is disordered; that stretch reads FNETLDNNNNNDNNNERKTTT. Over residues 2204 to 2215 the composition is skewed to low complexity; the sequence is NETLDNNNNNDN. 3 AAA regions span residues 2281-2632, 2751-3004, and 3097-3367; these read NEIH…YEYI, DVDR…WKLA, and IFNE…GNRY. 2319–2326 contacts ATP; that stretch reads GDVGTGKS. The tract at residues 2507-2529 is disordered; that stretch reads EKNQNGNENGNENEKKNINIINN. ATP-binding positions include 2790 to 2797 and 3135 to 3142; these read GPPGSGKT and GASGAGKT. Positions 3386–3701 are stalk; the sequence is IDEKKEEVSS…ETFINLEEAS (316 aa). Coiled-coil stretches lie at residues 3388–3466 and 3970–3997; these read EKKE…LDEQ and TMEK…EVEN. 2 AAA regions span residues 3754-3983 and 4289-4507; these read LSRP…EASK and FNKI…VVDS. Positions 4686–4705 are enriched in basic and acidic residues; sequence KDKNKDEDKNKNKENDDNNK. The interval 4686–4727 is disordered; sequence KDKNKDEDKNKNKENDDNNKKHIGNNKLVISSSERTESETSE.

The protein belongs to the dynein heavy chain family. In terms of assembly, consists of at least two heavy chains and a number of intermediate and light chains.

Its subcellular location is the cytoplasm. The protein localises to the cytoskeleton. In terms of biological role, acts as a motor for the intracellular retrograde motility of vesicles and organelles along microtubules. Dynein has ATPase activity; the force-producing power stroke is thought to occur on release of ADP. This chain is Dynein heavy chain-like protein 1, found in Plasmodium falciparum (isolate 3D7).